The primary structure comprises 1173 residues: 3-hydroxy-3-methylglutaryl coenzyme A reductase mlcD (1173 aa).

N-linked (GlcNAc...) asparagine glycans are attached at residues N143 and N186. The 180-residue stretch at 241-420 (DVVVMVLGYI…FTFYTAILSI (180 aa)) folds into the SSD domain. The next 7 membrane-spanning stretches (helical) occupy residues 242 to 262 (VVVMVLGYISMHLTFVSLFLS), 272 to 292 (LATSVLLSSTFAFLLGLDVAI), 302 to 322 (LLSEGLPFLVVIVGFEKSITL), 368 to 388 (NIVCHYVVEILLLVIGAVLGI), 397 to 417 (VLAALILFFDCLLLFTFYTAI), 479 to 499 (FWMVVGFLIVNLVNIGSTLFQ), and 594 to 614 (VLSKWVFVALALSVALNSYLF). Residues 498-673 (FQASSSGSLS…FTPTTTDSDS (176 aa)) are linker. The span at 647-666 (NQTPQIQSSLQAPQTRVFTP) shows a compositional bias: polar residues. The tract at residues 647 to 669 (NQTPQIQSSLQAPQTRVFTPTTT) is disordered. The tract at residues 674-1133 (DASLVLIKAS…LVKAHMAHNR (460 aa)) is catalytic. E822 acts as the Charge relay system in catalysis. The N-linked (GlcNAc...) asparagine glycan is linked to N886. K956 functions as the Charge relay system in the catalytic mechanism. The N-linked (GlcNAc...) asparagine glycan is linked to N997. The active-site Charge relay system is D1032. Catalysis depends on H1128, which acts as the Proton donor. N1132 carries an N-linked (GlcNAc...) asparagine glycan. Residues 1132-1173 (NRSAPASSAPSRSVSPSGGTRTVPVPNNALRPSAAATDRARR) are disordered. The segment covering 1133 to 1148 (RSAPASSAPSRSVSPS) has biased composition (low complexity).

This sequence belongs to the HMG-CoA reductase family.

It localises to the endoplasmic reticulum membrane. The enzyme catalyses (R)-mevalonate + 2 NADP(+) + CoA = (3S)-3-hydroxy-3-methylglutaryl-CoA + 2 NADPH + 2 H(+). Its pathway is polyketide biosynthesis. Its function is as follows. HMG-CoA reductase; part of the gene cluster that mediates the biosynthesis of compactin, also known as mevastatin or ML-236B, and which acts as a potent competitive inhibitor of HMG-CoA reductase. Compactin biosynthesis is performed in two stages. The first stage is catalyzed by the nonaketide synthase mlcA, which belongs to type I polyketide synthases and catalyzes the iterative nine-step formation of the polyketide. This PKS stage is completed by the action of dehydrogenase mlcG, which catalyzes the NADPH-dependent reduction of the unsaturated tetra-, penta- and heptaketide intermediates that arise during the mlcA-mediated biosynthesis of the nonaketide chain and leads to dihydro-ML-236C carboxylate. Covalently bound dihydro-ML-236C carboxylate is released from mlcA by the mlcF esterase. Conversion of dihydro-ML-236C carboxylate into ML-236A carboxylate is subsequently performed with the participation of molecular oxygen and P450 monoogygenase mlcC. Finally, mlcH performs the conversion of ML-236A carboxylate to ML-236B/compactin carboxylate through the addition of the side-chain diketide moiety produced by the diketide synthase mlcB. HMG-CoA reductase mlcD may act as a down-regulator of compactin production and is involved in conferring resistance to ML-236B/compactin. In Penicillium citrinum, this protein is 3-hydroxy-3-methylglutaryl coenzyme A reductase mlcD.